The primary structure comprises 258 residues: MKITKIEKKKRLYLVEIDKKESLYVTEDTIVKYMLTKEMALSKDQLEDIKNFAQFSHGKNLALYFISFKQRTEKEVRDYLFKHEINPHIIPQIIDNLKKDHWIDDYKLLESLAQQNLNSGDKGAYALKQKWLQKGCEKQVIDEVLTQFDFSEVAIKVTSKLLRKYQGKLPTKSLKDKLIQNLINKGFSFQESKNAINQLELEADEENEQALLYKEIEKQYQKFSKKYDGYELKQHLTQSLFRKGYDFDAIASALREYF.

The protein belongs to the RecX family.

It localises to the cytoplasm. Functionally, modulates RecA activity. This is Regulatory protein RecX from Streptococcus thermophilus (strain CNRZ 1066).